The sequence spans 203 residues: Imidazole glycerol phosphate synthase subunit HisH 1 (203 aa).

A Glutamine amidotransferase type-1 domain is found at 1-203 (MIAIIDYNAG…KMIENFVELI (203 aa)). Cys82 acts as the Nucleophile in catalysis. Residues His184 and Glu186 contribute to the active site.

In terms of assembly, heterodimer of HisH and HisF.

Its subcellular location is the cytoplasm. It catalyses the reaction 5-[(5-phospho-1-deoxy-D-ribulos-1-ylimino)methylamino]-1-(5-phospho-beta-D-ribosyl)imidazole-4-carboxamide + L-glutamine = D-erythro-1-(imidazol-4-yl)glycerol 3-phosphate + 5-amino-1-(5-phospho-beta-D-ribosyl)imidazole-4-carboxamide + L-glutamate + H(+). The enzyme catalyses L-glutamine + H2O = L-glutamate + NH4(+). The protein operates within amino-acid biosynthesis; L-histidine biosynthesis; L-histidine from 5-phospho-alpha-D-ribose 1-diphosphate: step 5/9. In terms of biological role, IGPS catalyzes the conversion of PRFAR and glutamine to IGP, AICAR and glutamate. The HisH subunit provides the glutamine amidotransferase activity that produces the ammonia necessary to HisF for the synthesis of IGP and AICAR. The chain is Imidazole glycerol phosphate synthase subunit HisH 1 (hisH1) from Methanococcus maripaludis (strain DSM 14266 / JCM 13030 / NBRC 101832 / S2 / LL).